Reading from the N-terminus, the 72-residue chain is Crustacean hyperglycemic hormone (72 aa).

Disulfide bonds link C7/C43, C23/C39, and C26/C52. Residue V72 is modified to Valine amide.

The protein localises to the secreted. Hormone found in the sinus gland of isopods and decapods which controls the blood sugar level. Has a secretagogue action over the amylase released from the midgut gland. May act as a stress hormone and may be involved in the control of molting and reproduction. This is Crustacean hyperglycemic hormone from Penaeus schmitti (White shrimp).